Consider the following 58-residue polypeptide: uncharacterized protein (58 aa).

This is an uncharacterized protein from Archaeoglobus fulgidus (strain ATCC 49558 / DSM 4304 / JCM 9628 / NBRC 100126 / VC-16).